Here is a 63-residue protein sequence, read N- to C-terminus: UPF0434 protein Sde_1297 (63 aa).

This sequence belongs to the UPF0434 family.

This Saccharophagus degradans (strain 2-40 / ATCC 43961 / DSM 17024) protein is UPF0434 protein Sde_1297.